Here is a 152-residue protein sequence, read N- to C-terminus: Flagellar assembly factor FliW (152 aa).

The protein belongs to the FliW family. As to quaternary structure, interacts with translational regulator CsrA and flagellin(s).

It is found in the cytoplasm. In terms of biological role, acts as an anti-CsrA protein, binds CsrA and prevents it from repressing translation of its target genes, one of which is flagellin. Binds to flagellin and participates in the assembly of the flagellum. The sequence is that of Flagellar assembly factor FliW from Caldicellulosiruptor saccharolyticus (strain ATCC 43494 / DSM 8903 / Tp8T 6331).